The sequence spans 586 residues: Arginine--tRNA ligase (586 aa).

A 'HIGH' region motif is present at residues 131–141 (ANPTGPLHVGH).

The protein belongs to the class-I aminoacyl-tRNA synthetase family. Monomer.

It localises to the cytoplasm. It carries out the reaction tRNA(Arg) + L-arginine + ATP = L-arginyl-tRNA(Arg) + AMP + diphosphate. This chain is Arginine--tRNA ligase, found in Nitrosomonas europaea (strain ATCC 19718 / CIP 103999 / KCTC 2705 / NBRC 14298).